The primary structure comprises 243 residues: HTH-type quorum sensing-dependent transcriptional regulator RpaR (243 aa).

Residues 174–239 (KPIRRNRLTP…AAVAKALTLG (66 aa)) form the HTH luxR-type domain. A DNA-binding region (H-T-H motif) is located at residues 198-217 (AWEISVILCITERTVKFHLI).

The protein belongs to the autoinducer-regulated transcriptional regulatory protein family.

In terms of biological role, responds to the quorum-sensing autoinducer 4-coumaroyl-homoserine lactone to regulate expression of several genes. Represses expression of rpaI in the absence of the inducer. This Rhodopseudomonas palustris (strain ATCC BAA-98 / CGA009) protein is HTH-type quorum sensing-dependent transcriptional regulator RpaR.